The following is a 445-amino-acid chain: FAD-dependent monooxygenase sorC (445 aa).

Residues 8-28 traverse the membrane as a helical segment; that stretch reads PFEVAIVGGGITGLALAVGLL. N-linked (GlcNAc...) asparagine glycosylation occurs at Asn31. The FAD site is built by Glu38 and Arg119. Residue Arg201 is part of the active site. 2 residues coordinate FAD: Asp323 and Ala336. Asn358 carries N-linked (GlcNAc...) asparagine glycosylation.

The protein belongs to the paxM FAD-dependent monooxygenase family. The cofactor is FAD.

The protein localises to the membrane. It functions in the pathway secondary metabolite biosynthesis. FAD-dependent monooxygenase; part of the gene cluster that mediates the biosynthesis of sorbicillinoids, a diverse group of yellow secondary metabolites that restrict growth of competing pathogenic fungi but not of bacteria. Sorbicillinoids biosynthesis requires the action of two PKSs. SorA iteratively combines three acetyl units and the growing chain is modified by the ketoacyl reductase subunit, and optional by the enoyl reductase subunit in the second cycle. The polyketide is then handed over to the PKS SorB, which adds three more acetyl units, and two methyl groups. SorB releases an aldehyde, which undergoes spontaneous cyclization resulting in the formation of sorbicillin or 2',3'-dihydrosorbicillin. The monooxygenase sorC oxidizes sorbicillin and 2',3'-dihydrosorbicillin to 2',3'-dihydrosorbicillinol and sorbicillinol, respectively. The oxidoreductase sorD further converts sorbicillinol into oxosorbicillinol. Sorbicillinol is the building block for the other sorbicillinoids such as disorbicillinol, bisvertinolon, and dihydrobisvertinolone. This is FAD-dependent monooxygenase sorC from Penicillium rubens (strain ATCC 28089 / DSM 1075 / NRRL 1951 / Wisconsin 54-1255) (Penicillium chrysogenum).